We begin with the raw amino-acid sequence, 69 residues long: Consomatin Be1 (69 aa).

The first 22 residues, 1-22 (MEMAYWVMVMMMVWITAPLSEG), serve as a signal peptide directing secretion. The propeptide occupies 23 to 57 (GKLNDVIRALAPDDVTPQFILRSLISRRRSDSDVR). 4-carboxyglutamate is present on Glu58. An intrachain disulfide couples Cys62 to Cys67. Residue Trp64 is modified to D-tryptophan. A 4-hydroxyproline mark is found at Pro68 and Pro69.

It belongs to the conotoxin C superfamily. Consomatin family. As to expression, expressed by the venom duct.

Its subcellular location is the secreted. Its function is as follows. Moderately activates human somatostatin receptors (SSTR) with a preferential activation of SSTR1 and SSTR4. In vivo, does not cause behavioral changes in mice within a few minutes of intracranial injection, but causes a progressive loss of movement thereafter. Four to five hours after injection, mice recover, even with the highest dose tested. Shows antinociception and antihyperalgesia activities in two mouse models of acute pain, most probably by acting outside the central nervous system. In Conus betulinus (Beech cone), this protein is Consomatin Be1.